The sequence spans 107 residues: Small ribosomal subunit protein uS10 (107 aa).

This sequence belongs to the universal ribosomal protein uS10 family. As to quaternary structure, part of the 30S ribosomal subunit.

In terms of biological role, involved in the binding of tRNA to the ribosomes. This Deinococcus deserti (strain DSM 17065 / CIP 109153 / LMG 22923 / VCD115) protein is Small ribosomal subunit protein uS10.